The chain runs to 275 residues: Integrase homolog (275 aa).

The segment covering 88-111 (RVSQDRQAQGRERRSVLLPQERRG) has biased composition (basic and acidic residues). Positions 88–120 (RVSQDRQAQGRERRSVLLPQERRGSSGRQPLYS) are disordered.

Belongs to the 'phage' integrase family.

In terms of biological role, integrase-recombinase proteins are responsible for catalyzing strand exchange between DNA molecules and play an important role in the DNA replication. Functionally, may be required for the formation of concatameric complex replicative intermediates and/or their resolution before encapsidation. The polypeptide is Integrase homolog (INT) (Dryophytes versicolor (chameleon treefrog)).